A 503-amino-acid chain; its full sequence is Interferon regulatory factor 7 (503 aa).

The IRF tryptophan pentad repeat DNA-binding region spans 11–126 (RVLFGEWLLG…DPHKVYALSR (116 aa)). A disordered region spans residues 69-88 (RWPPSSRGGGPPPEAETAER). Lysine 92 is subject to N6-acetyllysine; by KAT2A and KAT2B. 2 disordered regions span residues 133–156 (GPGT…GPPG) and 242–277 (TTPS…SPSA). Pro residues predominate over residues 146–156 (AVPPPQGGPPG). The interval 284 to 456 (PSPGALDVTI…SLVLVKLEPW (173 aa)) is necessary for the interaction with NMI. Lysine 375 is covalently cross-linked (Glycyl lysine isopeptide (Lys-Gly) (interchain with G-Cter in ubiquitin)). Glycyl lysine isopeptide (Lys-Gly) (interchain with G-Cter in SUMO) cross-links involve residues lysine 444 and lysine 446. Serine 471, serine 472, and serine 475 each carry phosphoserine. 2 positions are modified to phosphoserine; by TBK1 and IKKE: serine 477 and serine 479. Phosphoserine is present on residues serine 483, serine 484, and serine 487.

This sequence belongs to the IRF family. As to quaternary structure, monomer. Homodimer; phosphorylation-induced. Heterodimer with IRF3. Interacts with TICAM1 and TICAM2. Interacts with MYD88 and TRAF6. Interacts with TRIM35. Interacts with NMI; the interaction is direct and leads to the inhibition of IRF7-mediated type I IFN production. Interacts with GBP4; preventing interaction between TRAF6 and IRF7, resulting in impaired TRAF6-mediated IRF7 ubiquitination. (Microbial infection) Interacts with Epstein-Barr virus LF2 and LMP1. In terms of assembly, (Microbial infection) Interacts with rotavirus A NSP1; this interaction leads to the proteasome-dependent degradation of IRF7. As to quaternary structure, (Microbial infection) Interacts with human herpes virus 8/HHV-8 proteins ORF45 and vIRF-1. (Microbial infection) Interacts with human T-cell leukemia virus 1/HTLV-1 protein HBZ. In terms of assembly, (Microbial infection) Interacts with Seneca Valley virus protease 3C; this interaction is involved in the suppression of IRF7 expression and phosphorylation by the virus. As to quaternary structure, (Microbial infection) Interacts with ebolavirus VP35; this interaction mediates the sumoylation of IRF7 and contributes to the viral inhibition of IFN-type I production. (Microbial infection) Interacts with severe fever with thrombocytopenia syndrome virus (SFTSV) NSs; this interaction sequesters IRF7 in NSs-induced cytoplasmic inclusion bodies. In terms of assembly, (Microbial infection) Interacts with herpes virus 8/HHV-8 protein vIRF-4; this interaction prevents IRF7 dimerization and subsequent activation. As to quaternary structure, (Microbial infection) Interacts with human metapneumovirus protein M2-2; this interaction prevents IRF7 phosphorlyation and subsequent TLR7/9-dependent IFN-alpha induction. In terms of processing, acetylation inhibits its DNA-binding ability and activity. Post-translationally, in response to a viral infection, phosphorylated on Ser-477 and Ser-479 by TBK1 and IKBKE1. Phosphorylation, and subsequent activation is inhibited by vaccinia virus protein E3. In TLR7- and TLR9-mediated signaling pathway, phosphorylated by IRAK1. TRAF6-mediated ubiquitination is required for IRF7 activation. TRIM35 mediates IRF7 'Lys-48'-linked polyubiquitination and subsequent proteasomal degradation. Ubiquitinated by UBE3C, leading to its degradation. In terms of processing, sumoylated by TRIM28, which inhibits its transactivation activity. Post-translationally, (Microbial infection) Cleaved and inactivated by the protease 3C of enterovirus 71 allowing the virus to disrupt the host type I interferon production. (Microbial infection) Cleaved and inactivated by the protease 3C of human enterovirus 68D (EV68) allowing the virus to disrupt the host type I interferon production. In terms of processing, 'Lys-48'-linked polyubiquitination and subsequent proteasomal degradation is NMI-dependent in response to Sendai virus infection. Post-translationally, 'Lys-63'-linked ubiquitination by NEURL3 promotes IRF7 activation. Expressed predominantly in spleen, thymus and peripheral blood leukocytes.

It is found in the nucleus. The protein localises to the cytoplasm. With respect to regulation, in the absence of viral infection, maintained as a monomer in an autoinhibited state and phosphorylation disrupts this autoinhibition leading to the liberation of the DNA-binding and dimerization activities and its nuclear localization where it can activate type I IFN and ISG genes. In terms of biological role, key transcriptional regulator of type I interferon (IFN)-dependent immune responses and plays a critical role in the innate immune response against DNA and RNA viruses. Regulates the transcription of type I IFN genes (IFN-alpha and IFN-beta) and IFN-stimulated genes (ISG) by binding to an interferon-stimulated response element (ISRE) in their promoters. Can efficiently activate both the IFN-beta (IFNB) and the IFN-alpha (IFNA) genes and mediate their induction via both the virus-activated, MyD88-independent pathway and the TLR-activated, MyD88-dependent pathway. Induces transcription of ubiquitin hydrolase USP25 mRNA in response to lipopolysaccharide (LPS) or viral infection in a type I IFN-dependent manner. Required during both the early and late phases of the IFN gene induction but is more critical for the late than for the early phase. Exists in an inactive form in the cytoplasm of uninfected cells and following viral infection, double-stranded RNA (dsRNA), or toll-like receptor (TLR) signaling, becomes phosphorylated by IKBKE and TBK1 kinases. This induces a conformational change, leading to its dimerization and nuclear localization where along with other coactivators it can activate transcription of the type I IFN and ISG genes. Can also play a role in regulating adaptive immune responses by inducing PSMB9/LMP2 expression, either directly or through induction of IRF1. Binds to the Q promoter (Qp) of EBV nuclear antigen 1 a (EBNA1) and may play a role in the regulation of EBV latency. Can activate distinct gene expression programs in macrophages and regulate the anti-tumor properties of primary macrophages. The polypeptide is Interferon regulatory factor 7 (IRF7) (Homo sapiens (Human)).